A 244-amino-acid polypeptide reads, in one-letter code: Small ribosomal subunit protein eS4 (244 aa).

Residues 37-123 (VPLAILLKYY…AKYKFVRIMN (87 aa)) form the S4 RNA-binding domain.

This sequence belongs to the eukaryotic ribosomal protein eS4 family.

This Sulfolobus acidocaldarius (strain ATCC 33909 / DSM 639 / JCM 8929 / NBRC 15157 / NCIMB 11770) protein is Small ribosomal subunit protein eS4 (rps4e).